The chain runs to 588 residues: Adenylate kinase 5, chloroplastic (588 aa).

The interval 1–34 is disordered; the sequence is MASLSLSSAHFSSTSSSSRSSISTSSLSPSSTSL. A chloroplast-targeting transit peptide spans 1–73; that stretch reads MASLSLSSAH…SFSTSNSQIR (73 aa). 89-94 contributes to the ATP binding site; the sequence is ASGKGT. The NMP stretch occupies residues 109–138; sequence STGDLLRAEVSSGTDIGKRAKEFMNSGSLV. AMP contacts are provided by residues R115, 136-138, 165-168, and Q172; these read SLV and GFPR. Positions 202-235 are LID; the sequence is GRRLDPVTGKIYHIKNYPPESDEIKARLVTRPDD. R203 is a binding site for ATP. 2 residues coordinate AMP: R232 and R243.

The protein belongs to the adenylate kinase family. In terms of assembly, monomer.

The protein resides in the plastid. The protein localises to the chloroplast. It carries out the reaction AMP + ATP = 2 ADP. Its function is as follows. Catalyzes the reversible transfer of the terminal phosphate group between ATP and AMP. The protein is Adenylate kinase 5, chloroplastic of Arabidopsis thaliana (Mouse-ear cress).